The primary structure comprises 335 residues: Casein kinase I (335 aa).

In terms of domain architecture, Protein kinase spans 9 to 278 (YRLGRKIGSG…LRRLFKDLFF (270 aa)). Residues 15–23 (IGSGSFGDI) and Lys38 each bind ATP. Residue Asp128 is the Proton acceptor of the active site. A disordered region spans residues 304–335 (RSMVNQGAESGNQWRRDASGRDPLGRLPQLEP). The segment covering 305–316 (SMVNQGAESGNQ) has biased composition (polar residues). Basic and acidic residues predominate over residues 317 to 327 (WRRDASGRDPL).

It belongs to the protein kinase superfamily. CK1 Ser/Thr protein kinase family. Casein kinase I subfamily.

The catalysed reaction is L-seryl-[protein] + ATP = O-phospho-L-seryl-[protein] + ADP + H(+). The enzyme catalyses L-threonyl-[protein] + ATP = O-phospho-L-threonyl-[protein] + ADP + H(+). Functionally, casein kinases are operationally defined by their preferential utilization of acidic proteins such as caseins as substrates. It can phosphorylate a large number of proteins. The sequence is that of Casein kinase I from Eimeria tenella (Coccidian parasite).